A 205-amino-acid polypeptide reads, in one-letter code: Cbp/p300-interacting transactivator 3 (205 aa).

Belongs to the CITED family.

The protein localises to the nucleus. In terms of biological role, acts as a transcriptional coactivator. Enhances estrogen-dependent transactivation mediated by estrogen receptors. The protein is Cbp/p300-interacting transactivator 3 (CITED3) of Gallus gallus (Chicken).